A 450-amino-acid chain; its full sequence is UDP-N-acetylmuramoylalanine--D-glutamate ligase (450 aa).

ATP is bound at residue 119–125 (GSNGKTT).

Belongs to the MurCDEF family.

The protein resides in the cytoplasm. The catalysed reaction is UDP-N-acetyl-alpha-D-muramoyl-L-alanine + D-glutamate + ATP = UDP-N-acetyl-alpha-D-muramoyl-L-alanyl-D-glutamate + ADP + phosphate + H(+). It functions in the pathway cell wall biogenesis; peptidoglycan biosynthesis. Cell wall formation. Catalyzes the addition of glutamate to the nucleotide precursor UDP-N-acetylmuramoyl-L-alanine (UMA). This chain is UDP-N-acetylmuramoylalanine--D-glutamate ligase, found in Bacillus cereus (strain Q1).